Here is a 769-residue protein sequence, read N- to C-terminus: Acetyl-coenzyme A carboxylase carboxyl transferase subunit alpha, chloroplastic (769 aa).

A chloroplast-targeting transit peptide spans 1–54 (MASISHSSLALGGASSASASDYLRSSSNGVNGVPLKTLGRAVFTTIRRKDLAVT). The CoA carboxyltransferase C-terminal domain maps to 132 to 385 (LENKYRQALK…KIAINENMNE (254 aa)). Coiled-coil stretches lie at residues 426-504 (EAVF…ASSE) and 631-744 (KQNQ…SDGS). The tract at residues 718 to 769 (GLQEKQDELEKELAAARELAAEESDGSVKEDDDDDEDSSESGKSEMVNPSFA) is disordered. The span at 721–732 (EKQDELEKELAA) shows a compositional bias: basic and acidic residues. Over residues 738-756 (AEESDGSVKEDDDDDEDSS) the composition is skewed to acidic residues. Residue Ser741 is modified to Phosphoserine.

It belongs to the AccA family. Acetyl-CoA carboxylase is a heterohexamer composed of biotin carboxyl carrier protein, biotin carboxylase and two subunits each of ACCase subunit alpha and ACCase plastid-coded subunit beta (accD). In terms of tissue distribution, accumulates in fatty acids synthesizing tissues such as embryos, expanding leaves, flower buds, flowers, and developing siliques.

It localises to the plastid. Its subcellular location is the chloroplast inner membrane. It carries out the reaction N(6)-carboxybiotinyl-L-lysyl-[protein] + acetyl-CoA = N(6)-biotinyl-L-lysyl-[protein] + malonyl-CoA. The protein operates within lipid metabolism; malonyl-CoA biosynthesis; malonyl-CoA from acetyl-CoA: step 1/1. Its function is as follows. Component of the acetyl coenzyme A carboxylase (ACC) complex. First, biotin carboxylase catalyzes the carboxylation of biotin on its carrier protein (BCCP) and then the CO(2) group is transferred by the carboxyltransferase to acetyl-CoA to form malonyl-CoA. The polypeptide is Acetyl-coenzyme A carboxylase carboxyl transferase subunit alpha, chloroplastic (CAC3) (Arabidopsis thaliana (Mouse-ear cress)).